The chain runs to 520 residues: Poly(A)-specific ribonuclease PNLDC1 (520 aa).

Mg(2+)-binding residues include Asp-17, Glu-19, Asp-260, and Asp-354. Residues 497–513 (CLLQVCGIVTAWALLAF) traverse the membrane as a helical segment.

Belongs to the CAF1 family. Requires Mg(2+) as cofactor.

The protein localises to the endoplasmic reticulum membrane. It carries out the reaction Exonucleolytic cleavage of poly(A) to 5'-AMP.. 3'-exoribonuclease that has a preference for poly(A) tails of mRNAs, thereby efficiently degrading poly(A) tails. Exonucleolytic degradation of the poly(A) tail is often the first step in the decay of eukaryotic mRNAs and is also used to silence certain maternal mRNAs translationally during oocyte maturation and early embryonic development. May act as a regulator of multipotency in embryonic stem cells. Is a critical factor for proper spermatogenesis, involved in pre-piRNAs processing to generate mature piRNAs. The chain is Poly(A)-specific ribonuclease PNLDC1 from Pongo abelii (Sumatran orangutan).